The following is a 199-amino-acid chain: NAD(P)H dehydrogenase (quinone) (199 aa).

The Flavodoxin-like domain occupies 4-190 (VLVLYYSSYG…EGARHQGELV (187 aa)). Residues 10-15 (SSYGHI) and 78-80 (TRY) each bind FMN. Tyrosine 12 serves as a coordination point for NAD(+). Position 98 (tryptophan 98) interacts with substrate. Residues 113 to 119 (STATQHG) and histidine 134 contribute to the FMN site.

It belongs to the WrbA family. FMN is required as a cofactor.

The enzyme catalyses a quinone + NADH + H(+) = a quinol + NAD(+). It carries out the reaction a quinone + NADPH + H(+) = a quinol + NADP(+). This is NAD(P)H dehydrogenase (quinone) from Paraburkholderia phymatum (strain DSM 17167 / CIP 108236 / LMG 21445 / STM815) (Burkholderia phymatum).